The primary structure comprises 255 residues: 3-deoxy-manno-octulosonate cytidylyltransferase (255 aa).

This sequence belongs to the KdsB family.

The protein localises to the cytoplasm. It catalyses the reaction 3-deoxy-alpha-D-manno-oct-2-ulosonate + CTP = CMP-3-deoxy-beta-D-manno-octulosonate + diphosphate. It functions in the pathway nucleotide-sugar biosynthesis; CMP-3-deoxy-D-manno-octulosonate biosynthesis; CMP-3-deoxy-D-manno-octulosonate from 3-deoxy-D-manno-octulosonate and CTP: step 1/1. Its pathway is bacterial outer membrane biogenesis; lipopolysaccharide biosynthesis. In terms of biological role, activates KDO (a required 8-carbon sugar) for incorporation into bacterial lipopolysaccharide in Gram-negative bacteria. The protein is 3-deoxy-manno-octulosonate cytidylyltransferase of Cellvibrio japonicus (strain Ueda107) (Pseudomonas fluorescens subsp. cellulosa).